The primary structure comprises 198 residues: Recombination protein RecR (198 aa).

The C4-type zinc-finger motif lies at 57 to 72 (CSVCGHITENDPCYIC). The Toprim domain occupies 80 to 175 (SVICVVEDDK…KVTRLAQGLS (96 aa)).

Belongs to the RecR family.

May play a role in DNA repair. It seems to be involved in an RecBC-independent recombinational process of DNA repair. It may act with RecF and RecO. The protein is Recombination protein RecR of Staphylococcus aureus (strain Mu3 / ATCC 700698).